The chain runs to 827 residues: Cytosolic Fe-S cluster assembly factor NAR1 (827 aa).

Cysteine 22 contributes to the [4Fe-4S] cluster binding site. A disordered region spans residues 57–77 (AYYESSTPPSSSLSAADSRPR). A compositionally biased stretch (low complexity) spans 61-73 (SSTPPSSSLSAAD). [4Fe-4S] cluster contacts are provided by cysteine 92, cysteine 95, and cysteine 98. Residues 209–231 (RENARKRAKLSNAPADDDDRLHP) form a disordered region. The [4Fe-4S] cluster site is built by cysteine 246, cysteine 307, cysteine 591, and cysteine 595. Disordered regions lie at residues 599–637 (GGQI…WAAD) and 709–739 (DQGG…NAKS). Composition is skewed to polar residues over residues 604-621 (PPTQ…TVDN) and 713-738 (ANDS…SNAK).

Belongs to the NARF family.

In terms of biological role, component of the cytosolic Fe/S protein assembly machinery. Required for maturation of extramitochondrial Fe/S proteins. May play a role in the transfer of pre-assembled Fe/S clusters to target apoproteins. The protein is Cytosolic Fe-S cluster assembly factor NAR1 (NAR1) of Mycosarcoma maydis (Corn smut fungus).